The primary structure comprises 253 residues: Sulfur carrier protein FdhD (253 aa).

The Cysteine persulfide intermediate role is filled by Cys100.

Belongs to the FdhD family.

It localises to the cytoplasm. Its function is as follows. Required for formate dehydrogenase (FDH) activity. Acts as a sulfur carrier protein that transfers sulfur from IscS to the molybdenum cofactor prior to its insertion into FDH. The protein is Sulfur carrier protein FdhD of Sulfolobus acidocaldarius (strain ATCC 33909 / DSM 639 / JCM 8929 / NBRC 15157 / NCIMB 11770).